A 474-amino-acid chain; its full sequence is Ribulose bisphosphate carboxylase large chain (474 aa).

P2 is modified (N-acetylproline). K13 is subject to N6,N6,N6-trimethyllysine. Substrate-binding residues include N122 and T172. K174 serves as the catalytic Proton acceptor. K176 serves as a coordination point for substrate. K200, D202, and E203 together coordinate Mg(2+). Position 200 is an N6-carboxylysine (K200). H293 functions as the Proton acceptor in the catalytic mechanism. Substrate-binding residues include R294, H326, and S378.

It belongs to the RuBisCO large chain family. Type I subfamily. Heterohexadecamer of 8 large chains and 8 small chains; disulfide-linked. The disulfide link is formed within the large subunit homodimers. Mg(2+) serves as cofactor. Post-translationally, the disulfide bond which can form in the large chain dimeric partners within the hexadecamer appears to be associated with oxidative stress and protein turnover.

It localises to the plastid. Its subcellular location is the chloroplast. It catalyses the reaction 2 (2R)-3-phosphoglycerate + 2 H(+) = D-ribulose 1,5-bisphosphate + CO2 + H2O. It carries out the reaction D-ribulose 1,5-bisphosphate + O2 = 2-phosphoglycolate + (2R)-3-phosphoglycerate + 2 H(+). In terms of biological role, ruBisCO catalyzes two reactions: the carboxylation of D-ribulose 1,5-bisphosphate, the primary event in carbon dioxide fixation, as well as the oxidative fragmentation of the pentose substrate in the photorespiration process. Both reactions occur simultaneously and in competition at the same active site. This is Ribulose bisphosphate carboxylase large chain from Oltmannsiellopsis viridis (Marine flagellate).